Reading from the N-terminus, the 224-residue chain is MQPIEGIVFDLYGTLYDVHSVVQACESAYPGQGEAISRLWRQKQLEYTWLSSLMGRYASFEQRTEEALRYTCKHLGLATDETTLRQLGQAYLHLAPHPDTTAALRRLKASGLPMAIASNGSHHSIEQVVSHSDMGWAFDHLISVETVKVFKPDNRVYSLAEQTMAIPRDRLLFVSSNSWDATGARHFGFPVCWVNRQGAVFDELGATPTREVRDLGEMSDWLLD.

Asp10 acts as the Nucleophile in catalysis. An (S)-2-haloacid-binding positions include 11–12 (LY), Arg41, and 118–119 (SN). The important for catalytic activity stretch occupies residues 175 to 180 (SSNSWD).

It belongs to the HAD-like hydrolase superfamily. S-2-haloalkanoic acid dehalogenase family.

It catalyses the reaction an (S)-2-haloacid + H2O = a (2R)-2-hydroxycarboxylate + a halide anion + H(+). The catalysed reaction is (S)-2-chloropropanoate + H2O = (R)-lactate + chloride + H(+). Functionally, catalyzes the hydrolytic dehalogenation of small (S)-2-haloalkanoic acids to yield the corresponding (R)-2-hydroxyalkanoic acids. Acts on acids of short chain lengths, C(2) to C(4), with inversion of configuration at C-2. Active with 2-halogenated carboxylic acids and converts only the S-isomer (or L-isomer) of 2-chloropropionic acid with inversion of configuration to produce R-lactate (or D-isomer). The polypeptide is (S)-2-haloacid dehalogenase H-109 (Pseudomonas putida (Arthrobacter siderocapsulatus)).